The sequence spans 270 residues: Homeobox protein Hox-D12 (270 aa).

The segment at 102 to 122 (APEAAAGPEERGRTRPSFAPE) is disordered. The homeobox DNA-binding region spans 202–261 (ARKKRKPYTKQQIAELENEFLVNEFINRQKRKELSNRLNLSDQQVKIWFQNRRMKKKRVV).

It belongs to the Abd-B homeobox family.

Its subcellular location is the nucleus. Its function is as follows. Sequence-specific transcription factor which is part of a developmental regulatory system that provides cells with specific positional identities on the anterior-posterior axis. This is Homeobox protein Hox-D12 (HOXD12) from Homo sapiens (Human).